The primary structure comprises 717 residues: Acetone carboxylase beta subunit (717 aa).

In terms of assembly, heterohexamer of two alpha, two beta and two gamma subunits. The cofactor is Fe cation. Requires Mg(2+) as cofactor. Zn(2+) serves as cofactor. Post-translationally, the N-terminus is blocked.

It catalyses the reaction acetone + hydrogencarbonate + 2 ATP + 3 H2O = acetoacetate + 2 AMP + 4 phosphate + 4 H(+). Functionally, catalyzes the carboxylation of acetone to form acetoacetate. Has a reduced activity on butanone, and no activity on 2-pentatone, 3-pentatone, 2-hexanone, chloroacetone, pyruvate, phosphoenolpyruvate, acetaldehyde, propionaldehyde and propylene oxide. The polypeptide is Acetone carboxylase beta subunit (Xanthobacter autotrophicus (strain ATCC BAA-1158 / Py2)).